The chain runs to 213 residues: MSKLSDIRREYSLGDLHRDALPDEPMSLFSKWMEEARDSELLSDPTAMSIATVDESGQPFQRIVLLKRFSEEGFVFFTNLESRKSQQIAHNAKVSLLFPWHSLERQVAITGEAEALSTADVMKYFITRPKESQIAAWVSQQSSKISARQVLETKYAEMKAKFSKGEVPLPKFWGGYLVKPSSIEFWQGGERRLHDRFLYDKGQSGWDISRLAP.

Substrate-binding positions include 8–11 (RREY) and K67. Residues 62-67 (RIVLLK), 77-78 (FT), R83, K84, and Q106 each bind FMN. Residues Y124, R128, and S132 each coordinate substrate. FMN-binding positions include 141–142 (QS) and W186. 192–194 (RLH) contacts substrate. R196 is a binding site for FMN.

It belongs to the pyridoxamine 5'-phosphate oxidase family. In terms of assembly, homodimer. The cofactor is FMN.

It catalyses the reaction pyridoxamine 5'-phosphate + O2 + H2O = pyridoxal 5'-phosphate + H2O2 + NH4(+). The catalysed reaction is pyridoxine 5'-phosphate + O2 = pyridoxal 5'-phosphate + H2O2. It functions in the pathway cofactor metabolism; pyridoxal 5'-phosphate salvage; pyridoxal 5'-phosphate from pyridoxamine 5'-phosphate: step 1/1. The protein operates within cofactor metabolism; pyridoxal 5'-phosphate salvage; pyridoxal 5'-phosphate from pyridoxine 5'-phosphate: step 1/1. Catalyzes the oxidation of either pyridoxine 5'-phosphate (PNP) or pyridoxamine 5'-phosphate (PMP) into pyridoxal 5'-phosphate (PLP). The chain is Pyridoxine/pyridoxamine 5'-phosphate oxidase from Shewanella woodyi (strain ATCC 51908 / MS32).